A 235-amino-acid chain; its full sequence is Proteasome subunit beta type-1 (235 aa).

The propeptide occupies 1–20; that stretch reads MSRLGFEQFPDYQVPGMKHP.

This sequence belongs to the peptidase T1B family. In terms of assembly, the 26S proteasome consists of a 20S proteasome core and two 19S regulatory subunits. The 20S proteasome core is composed of 28 subunits that are arranged in four stacked rings, resulting in a barrel-shaped structure. The two end rings are each formed by seven alpha subunits, and the two central rings are each formed by seven beta subunits. The catalytic chamber with the active sites is on the inside of the barrel.

It localises to the cytoplasm. It is found in the nucleus. Its function is as follows. Non-catalytic component of the proteasome, a multicatalytic proteinase complex which is characterized by its ability to cleave peptides with Arg, Phe, Tyr, Leu, and Glu adjacent to the leaving group at neutral or slightly basic pH. The proteasome has an ATP-dependent proteolytic activity. This chain is Proteasome subunit beta type-1 (Prosbeta6), found in Drosophila melanogaster (Fruit fly).